The primary structure comprises 264 residues: uncharacterized protein (264 aa).

3 helical membrane-spanning segments follow: residues 48–68, 112–132, and 142–162; these read LTITLLYLHPVSFSAILLLVF, ITPSAISSGLLVSLVLIFLLA, and LPIAIWIGLISLHPKLRSYLI. S260 carries the post-translational modification Phosphoserine.

Its subcellular location is the membrane. This is an uncharacterized protein from Schizosaccharomyces pombe (strain 972 / ATCC 24843) (Fission yeast).